Here is a 477-residue protein sequence, read N- to C-terminus: MAKIIAFDEKARRGLEGGMNQLADAVKVTLGPKGRNVVLEKKWGAPTITNDGVSIAKEIELEDPYEKIGAELVKEVAKKTDDVAGDGTTTATVLAQALVKEGLRNVAAGANPMALKRGIEKAVEAVSGALLEQAKDVETKEQIASTASISAADTQIGELIAEAMDKVGKEGVITVEEFQTFGLELELTEGMGFDKGYISAYFATDMERMEASLDDPYILIANSKIGNVKDLLPLLEKVMQSGKPLLIIAEDVEGEALSTLVVNKIRGTFKSVAVKAPGFGDRRKAMLGDIAILTGGEVISEEVGLKLENAGLDLLGRARKVVITKDETTIVDGAGDTDQVNGRVAQIRAEIENSDSDYDREKLQERLANVAGGVAVIKAGAATEVELKERKERKHRIEDAVRNAKAAVEEGIVAGGGVALLQASQVFEKLELTGDEATGANAVKLALEAPLKQIPSTAVSRAAWSWRRCATSPWATA.

ATP is bound by residues 29-32 (TLGP), 86-90 (DGTTT), and Gly-416.

This sequence belongs to the chaperonin (HSP60) family. Forms a cylinder of 14 subunits composed of two heptameric rings stacked back-to-back. Interacts with the co-chaperonin GroES.

The protein resides in the cytoplasm. It carries out the reaction ATP + H2O + a folded polypeptide = ADP + phosphate + an unfolded polypeptide.. In terms of biological role, together with its co-chaperonin GroES, plays an essential role in assisting protein folding. The GroEL-GroES system forms a nano-cage that allows encapsulation of the non-native substrate proteins and provides a physical environment optimized to promote and accelerate protein folding. The chain is Chaperonin GroEL 2 from Streptomyces lividans.